The primary structure comprises 349 residues: MAVMAQTVQETATVLEEEARTVTLVAPKTTPRKYKYIYTNFLTFSYAHLAALYGLYLCFTSAKWETLLFSFVLFHMSNIGITAGAHRLWTHKTFKAKLPLEIVLMIFNSLAFQNTAITWAREHRLHHKYSDTDADPHNASRGFFYSHVGWLLVKKHPDVLKYGKTIDMSDVYNNPVLKFQKKYAVPLIGTVCFALPTLIPVYCWGESWNNAWHIALFRYIFNLNVTFLVNSAAHIWGNKPYDKSILPAQNLLVSFLASGEGFHNYHHVFPWDYRTAELGNNFLNLTTLFIDFCAWFGWAYDLKSVSEDIIKQRAKRTGDGSSGVIWGWDDKDMDRDIKSKANIFYAKKE.

Transmembrane regions (helical) follow at residues 41–61 and 66–86; these read FLTF…CFTS and TLLF…AGAH. Positions 86 to 91 match the Histidine box-1 motif; the sequence is HRLWTH. The short motif at 123–127 is the Histidine box-2 element; it reads HRLHH. Residues 184 to 204 traverse the membrane as a helical segment; the sequence is AVPLIGTVCFALPTLIPVYCW. The short motif at 263-267 is the Histidine box-3 element; that stretch reads HNYHH. The helical transmembrane segment at 282-302 threads the bilayer; it reads FLNLTTLFIDFCAWFGWAYDL.

The protein belongs to the fatty acid desaturase type 1 family. Fe cation serves as cofactor. In terms of tissue distribution, adult female pheromone gland. Increases by two or three orders of magnitude during the first 2 days after adult eclosion.

It is found in the endoplasmic reticulum membrane. It carries out the reaction an 11,12-saturated fatty acyl-CoA + 2 Fe(II)-[cytochrome b5] + O2 + 2 H(+) = an (11Z)-Delta(11)-fatty acyl-CoA + 2 Fe(III)-[cytochrome b5] + 2 H2O. Its function is as follows. Catalyzes the formation of Delta(11) fatty acyl precursors in the pheromone gland. This Trichoplusia ni (Cabbage looper) protein is Acyl-CoA Delta(11) desaturase (D11DS).